The primary structure comprises 547 residues: CTP synthase (547 aa).

The amidoligase domain stretch occupies residues 1–265 (MARYVFITGG…DQAVLDAFGI (265 aa)). Ser-13 serves as a coordination point for CTP. Residue Ser-13 participates in UTP binding. ATP is bound by residues 14 to 19 (SLGKGL) and Asp-71. Residues Asp-71 and Glu-139 each coordinate Mg(2+). Residues 146–148 (DIE), 186–191 (KTKPTQ), and Lys-222 each bind CTP. UTP contacts are provided by residues 186-191 (KTKPTQ) and Lys-222. Positions 291-546 (RVAIVGKYTQ…VRAAVEVSRL (256 aa)) constitute a Glutamine amidotransferase type-1 domain. Gly-353 is a binding site for L-glutamine. Cys-380 serves as the catalytic Nucleophile; for glutamine hydrolysis. Residues 381–384 (LGMQ), Glu-404, and Arg-474 contribute to the L-glutamine site. Residues His-519 and Glu-521 contribute to the active site.

It belongs to the CTP synthase family. Homotetramer.

It carries out the reaction UTP + L-glutamine + ATP + H2O = CTP + L-glutamate + ADP + phosphate + 2 H(+). The enzyme catalyses L-glutamine + H2O = L-glutamate + NH4(+). It catalyses the reaction UTP + NH4(+) + ATP = CTP + ADP + phosphate + 2 H(+). Its pathway is pyrimidine metabolism; CTP biosynthesis via de novo pathway; CTP from UDP: step 2/2. With respect to regulation, allosterically activated by GTP, when glutamine is the substrate; GTP has no effect on the reaction when ammonia is the substrate. The allosteric effector GTP functions by stabilizing the protein conformation that binds the tetrahedral intermediate(s) formed during glutamine hydrolysis. Inhibited by the product CTP, via allosteric rather than competitive inhibition. Catalyzes the ATP-dependent amination of UTP to CTP with either L-glutamine or ammonia as the source of nitrogen. Regulates intracellular CTP levels through interactions with the four ribonucleotide triphosphates. The protein is CTP synthase of Cereibacter sphaeroides (strain ATCC 17023 / DSM 158 / JCM 6121 / CCUG 31486 / LMG 2827 / NBRC 12203 / NCIMB 8253 / ATH 2.4.1.) (Rhodobacter sphaeroides).